The sequence spans 484 residues: Glucan endo-1,3-beta-glucosidase 5 (484 aa).

Positions 1-26 (MLFKGVFAVFFVITLLYASLLIEVEG) are cleaved as a signal peptide. The N-linked (GlcNAc...) asparagine glycan is linked to Asn-102. The Proton donor role is filled by Glu-122. N-linked (GlcNAc...) asparagine glycosylation is found at Asn-129 and Asn-260. The active-site Nucleophile is Glu-267. A disulfide bridge connects residues Cys-366 and Cys-428. N-linked (GlcNAc...) asparagine glycosylation is present at Asn-409. Ala-460 carries GPI-anchor amidated alanine lipidation. Residues 461–484 (SAMMPITRSTAVLLLLSICLYIVL) constitute a propeptide, removed in mature form.

The protein belongs to the glycosyl hydrolase 17 family. Contains two additional disulfide bonds.

The protein resides in the cell membrane. The enzyme catalyses Hydrolysis of (1-&gt;3)-beta-D-glucosidic linkages in (1-&gt;3)-beta-D-glucans.. The polypeptide is Glucan endo-1,3-beta-glucosidase 5 (Arabidopsis thaliana (Mouse-ear cress)).